Consider the following 683-residue polypeptide: uncharacterized protein (683 aa).

Coiled-coil stretches lie at residues 62–124, 155–259, and 346–376; these read PEHY…RKER, TTTN…KLSQ, and KKSL…DGDV. The interval 213 to 237 is disordered; it reads QDQVESQTGPKKRRKSPIENQPTAG.

This is an uncharacterized protein from Invertebrate iridescent virus 3 (IIV-3).